Reading from the N-terminus, the 450-residue chain is DNA primase DnaG (450 aa).

The Toprim domain occupies 199–273; sequence DSIIVVEGRA…DVDYVARAPE (75 aa). Mg(2+) contacts are provided by Glu-205, Asp-247, and Asp-249. Positions 320-348 are enriched in basic and acidic residues; the sequence is APSKEVKPAPKHEPKPQPVEQKPREEKII. The interval 320-350 is disordered; sequence APSKEVKPAPKHEPKPQPVEQKPREEKIIRP.

This sequence belongs to the archaeal DnaG primase family. In terms of assembly, forms a ternary complex with MCM helicase and DNA. Component of the archaeal exosome complex. The cofactor is Mg(2+).

It carries out the reaction ssDNA + n NTP = ssDNA/pppN(pN)n-1 hybrid + (n-1) diphosphate.. RNA polymerase that catalyzes the synthesis of short RNA molecules used as primers for DNA polymerase during DNA replication. Also part of the exosome, which is a complex involved in RNA degradation. Acts as a poly(A)-binding protein that enhances the interaction between heteromeric, adenine-rich transcripts and the exosome. This is DNA primase DnaG from Thermococcus gammatolerans (strain DSM 15229 / JCM 11827 / EJ3).